The sequence spans 71 residues: ATP synthase subunit c (71 aa).

2 helical membrane passes run 5–25 (GAAI…AIIV) and 47–67 (FIGV…GFLI).

The protein belongs to the ATPase C chain family. In terms of assembly, F-type ATPases have 2 components, F(1) - the catalytic core - and F(0) - the membrane proton channel. F(1) has five subunits: alpha(3), beta(3), gamma(1), delta(1), epsilon(1). F(0) has three main subunits: a(1), b(2) and c(10-14). The alpha and beta chains form an alternating ring which encloses part of the gamma chain. F(1) is attached to F(0) by a central stalk formed by the gamma and epsilon chains, while a peripheral stalk is formed by the delta and b chains.

It is found in the cell membrane. Its function is as follows. F(1)F(0) ATP synthase produces ATP from ADP in the presence of a proton or sodium gradient. F-type ATPases consist of two structural domains, F(1) containing the extramembraneous catalytic core and F(0) containing the membrane proton channel, linked together by a central stalk and a peripheral stalk. During catalysis, ATP synthesis in the catalytic domain of F(1) is coupled via a rotary mechanism of the central stalk subunits to proton translocation. In terms of biological role, key component of the F(0) channel; it plays a direct role in translocation across the membrane. A homomeric c-ring of between 10-14 subunits forms the central stalk rotor element with the F(1) delta and epsilon subunits. The protein is ATP synthase subunit c of Alkalihalobacillus alcalophilus (Bacillus alcalophilus).